Reading from the N-terminus, the 178-residue chain is MSQKIRSTTVIAVRKDGKIVMAGDGQVTMGETVMKGNARKVRKIYDGKIITGFAGATADAFTLLEKFEIRVKEFSGDLTRAAVELAKDWRTDKMLKNLQALLLVADSKTTLLISGNGDVIEPEEDVLAIGSGGNYAYASALALMQNTNLSAREIAEKSLQIAGKICIYTNGKIITEEI.

Thr8 is an active-site residue. The Na(+) site is built by Gly163, Cys166, and Thr169.

Belongs to the peptidase T1B family. HslV subfamily. In terms of assembly, a double ring-shaped homohexamer of HslV is capped on each side by a ring-shaped HslU homohexamer. The assembly of the HslU/HslV complex is dependent on binding of ATP.

It localises to the cytoplasm. The catalysed reaction is ATP-dependent cleavage of peptide bonds with broad specificity.. With respect to regulation, allosterically activated by HslU binding. In terms of biological role, protease subunit of a proteasome-like degradation complex believed to be a general protein degrading machinery. In Treponema denticola (strain ATCC 35405 / DSM 14222 / CIP 103919 / JCM 8153 / KCTC 15104), this protein is ATP-dependent protease subunit HslV.